Reading from the N-terminus, the 605-residue chain is ABC transporter E family member 2 (605 aa).

A 4Fe-4S ferredoxin-type domain is found at 46 to 75 (KLAFISEELCIGCGICVKKCPFEAIQIINL). 2 consecutive ABC transporter domains span residues 70-315 (IQII…FLAG) and 344-568 (IQSY…LSHL). ATP is bound by residues 110-117 (GTNGIGKS) and 381-388 (GENGTGKT).

It belongs to the ABC transporter superfamily. ABCE family. Expressed in roots, stems, leaves, flowers and siliques.

Its subcellular location is the membrane. The sequence is that of ABC transporter E family member 2 (ABCE2) from Arabidopsis thaliana (Mouse-ear cress).